Reading from the N-terminus, the 477-residue chain is tRNA-2-methylthio-N(6)-dimethylallyladenosine synthase (477 aa).

The MTTase N-terminal domain maps to 3–120 (KKLHIKTWGC…LPTMIKQVQE (118 aa)). [4Fe-4S] cluster is bound by residues Cys-12, Cys-49, Cys-83, Cys-157, Cys-161, and Cys-164. The Radical SAM core domain occupies 143–375 (RAEGATAFVS…QHVINNQSMQ (233 aa)). Positions 378–441 (RAMLGSTQRI…PNSLRGKFLR (64 aa)) constitute a TRAM domain.

The protein belongs to the methylthiotransferase family. MiaB subfamily. In terms of assembly, monomer. Requires [4Fe-4S] cluster as cofactor.

The protein localises to the cytoplasm. The catalysed reaction is N(6)-dimethylallyladenosine(37) in tRNA + (sulfur carrier)-SH + AH2 + 2 S-adenosyl-L-methionine = 2-methylsulfanyl-N(6)-dimethylallyladenosine(37) in tRNA + (sulfur carrier)-H + 5'-deoxyadenosine + L-methionine + A + S-adenosyl-L-homocysteine + 2 H(+). Its function is as follows. Catalyzes the methylthiolation of N6-(dimethylallyl)adenosine (i(6)A), leading to the formation of 2-methylthio-N6-(dimethylallyl)adenosine (ms(2)i(6)A) at position 37 in tRNAs that read codons beginning with uridine. The protein is tRNA-2-methylthio-N(6)-dimethylallyladenosine synthase of Aeromonas hydrophila subsp. hydrophila (strain ATCC 7966 / DSM 30187 / BCRC 13018 / CCUG 14551 / JCM 1027 / KCTC 2358 / NCIMB 9240 / NCTC 8049).